The following is a 265-amino-acid chain: Hydroxyethylthiazole kinase (265 aa).

Substrate is bound at residue M50. ATP-binding residues include R125 and T171. G198 is a substrate binding site.

Belongs to the Thz kinase family. It depends on Mg(2+) as a cofactor.

It carries out the reaction 5-(2-hydroxyethyl)-4-methylthiazole + ATP = 4-methyl-5-(2-phosphooxyethyl)-thiazole + ADP + H(+). Its pathway is cofactor biosynthesis; thiamine diphosphate biosynthesis; 4-methyl-5-(2-phosphoethyl)-thiazole from 5-(2-hydroxyethyl)-4-methylthiazole: step 1/1. In terms of biological role, catalyzes the phosphorylation of the hydroxyl group of 4-methyl-5-beta-hydroxyethylthiazole (THZ). The protein is Hydroxyethylthiazole kinase of Salmonella paratyphi C (strain RKS4594).